Here is a 342-residue protein sequence, read N- to C-terminus: Elongation factor Ts (342 aa).

An involved in Mg(2+) ion dislocation from EF-Tu region spans residues Thr-79–Val-82.

It belongs to the EF-Ts family.

It localises to the cytoplasm. Associates with the EF-Tu.GDP complex and induces the exchange of GDP to GTP. It remains bound to the aminoacyl-tRNA.EF-Tu.GTP complex up to the GTP hydrolysis stage on the ribosome. This Lactococcus lactis subsp. lactis (strain IL1403) (Streptococcus lactis) protein is Elongation factor Ts (tsf).